A 403-amino-acid chain; its full sequence is Double C2-like domain-containing protein alpha (403 aa).

Residues 1–92 (MRGRRGDRMT…DSYDSDDTTA (92 aa)) are interaction with UNC13D and DYNLT1. C2 domains follow at residues 92-214 (ALGT…HFNI) and 254-387 (ERGR…ERWH). Ca(2+) contacts are provided by Asp123, Asp129, Asp184, Asp186, Asp285, Asp291, Asp345, Asp347, and Asp353. The segment at 218–403 (RQVPLPSPSS…PPAAGALPLA (186 aa)) is interaction with UNC13D.

Interacts (via N-terminus) with UNC13A. Interacts with cytoplasmic dynein light chain DYNLT1. Interacts with UNC13D. Ca(2+) serves as cofactor. As to expression, predominantly expressed in brain. Also found in non-neural tissues. Expressed in RBL-2H3 mast cell line.

Its subcellular location is the cytoplasmic vesicle. It is found in the secretory vesicle. The protein localises to the synaptic vesicle membrane. It localises to the synapse. The protein resides in the synaptosome. Its subcellular location is the lysosome. Its function is as follows. Calcium sensor which most probably regulates fusion of vesicles with membranes. Binds calcium and phospholipids. May be involved in calcium dependent neurotransmitter release through the interaction with UNC13A. May be involved in calcium-dependent spontaneous release of neurotransmitter in absence of action potentials in neuronal cells. Regulates Ca(2+)-dependent secretory lysosome exocytosis in mast cells. This Rattus norvegicus (Rat) protein is Double C2-like domain-containing protein alpha (Doc2a).